The chain runs to 366 residues: Fructose-bisphosphate aldolase 2 (366 aa).

Arg-60 and Lys-150 together coordinate substrate. The Proton acceptor role is filled by Glu-191. Lys-233 acts as the Schiff-base intermediate with dihydroxyacetone-P in catalysis.

Belongs to the class I fructose-bisphosphate aldolase family.

The catalysed reaction is beta-D-fructose 1,6-bisphosphate = D-glyceraldehyde 3-phosphate + dihydroxyacetone phosphate. It participates in carbohydrate degradation; glycolysis; D-glyceraldehyde 3-phosphate and glycerone phosphate from D-glucose: step 4/4. The polypeptide is Fructose-bisphosphate aldolase 2 (aldo-2) (Caenorhabditis elegans).